A 170-amino-acid polypeptide reads, in one-letter code: Adenine phosphoribosyltransferase (170 aa).

This sequence belongs to the purine/pyrimidine phosphoribosyltransferase family. In terms of assembly, homodimer.

Its subcellular location is the cytoplasm. It catalyses the reaction AMP + diphosphate = 5-phospho-alpha-D-ribose 1-diphosphate + adenine. The protein operates within purine metabolism; AMP biosynthesis via salvage pathway; AMP from adenine: step 1/1. Its function is as follows. Catalyzes a salvage reaction resulting in the formation of AMP, that is energically less costly than de novo synthesis. This chain is Adenine phosphoribosyltransferase, found in Streptococcus suis (strain 98HAH33).